The following is a 331-amino-acid chain: Reticulocalbin-1 (331 aa).

An N-terminal signal peptide occupies residues 1–29 (MARGGRGRRLGLALGLLLALVLAPRVLRA). N-linked (GlcNAc...) asparagine glycosylation is present at Asn-53. Position 55 is a phosphoserine (Ser-55). Phosphothreonine is present on Thr-76. EF-hand domains are found at residues 79–114 (ESKE…VQKR), 115–150 (YIFD…YYLG), 166–201 (KMLP…EEFE), 203–238 (MKEI…HEEN), 244–279 (WVLS…QDYD), and 280–315 (HAQA…FVGS). Ser-80 is modified (phosphoserine; by FAM20C). Positions 92, 94, 96, 103, 128, 130, 132, 134, 139, 179, 181, 183, 185, 190, 216, 218, 220, 227, 257, 259, 261, 263, 268, 293, 295, 297, 299, and 304 each coordinate Ca(2+). Residues 328–331 (HDEL) carry the Prevents secretion from ER motif.

It belongs to the CREC family. Post-translationally, O-glycosylated. O-mannosylated by POMT1 and POMT2 and elongated by POMGNT1.

The protein resides in the endoplasmic reticulum lumen. Functionally, may regulate calcium-dependent activities in the endoplasmic reticulum lumen or post-ER compartment. The polypeptide is Reticulocalbin-1 (RCN1) (Homo sapiens (Human)).